Here is a 908-residue protein sequence, read N- to C-terminus: Probable disease resistance RPP8-like protein 4 (908 aa).

Residues 15–57 (DLLSRESERLQGIDEQLDGLKRQLRSLQSLLKDADAKKHGSDR) adopt a coiled-coil conformation. The 314-residue stretch at 146–459 (RQRVQREIRQ…AEGIYDGSTI (314 aa)) folds into the NB-ARC domain. An ATP-binding site is contributed by 192–199 (GMGGIGKT). LRR repeat units lie at residues 575-599 (LTLLRVLDLSRVKFEGGKLPSSIGG), 600-623 (LIHLRYLSLYGAVVSHLPSTMRNL), and 842-867 (MPCLRTLTIHDCEKLKELPDGLKYIT).

Belongs to the disease resistance NB-LRR family. RPP8/HRT subfamily.

Its function is as follows. Potential disease resistance protein. The sequence is that of Probable disease resistance RPP8-like protein 4 (RPP8L4) from Arabidopsis thaliana (Mouse-ear cress).